The following is a 270-amino-acid chain: uncharacterized protein (270 aa).

Transmembrane regions (helical) follow at residues 12–32, 35–55, 64–84, 88–108, 117–137, 138–158, 171–191, 194–214, 226–246, and 248–268; these read AAIV…RNVG, TLSV…PFCL, TLLG…AAIQ, VAMA…LSVL, TLLA…PYAE, LTFG…VFVL, ITFY…LMFG, GSWL…FVLF, APIL…FYFG, and TLTL…LIAW. EamA domains lie at 19–133 and 150–269; these read VLMG…LMLT and LSYA…IAWR.

This sequence belongs to the EamA transporter family.

Its subcellular location is the cell membrane. This is an uncharacterized protein from Archaeoglobus fulgidus (strain ATCC 49558 / DSM 4304 / JCM 9628 / NBRC 100126 / VC-16).